The following is a 407-amino-acid chain: Methylthioribose-1-phosphate isomerase (407 aa).

Residue D275 is the Proton donor of the active site.

The protein belongs to the eIF-2B alpha/beta/delta subunits family. MtnA subfamily.

The protein localises to the cytoplasm. It localises to the nucleus. It carries out the reaction 5-(methylsulfanyl)-alpha-D-ribose 1-phosphate = 5-(methylsulfanyl)-D-ribulose 1-phosphate. It participates in amino-acid biosynthesis; L-methionine biosynthesis via salvage pathway; L-methionine from S-methyl-5-thio-alpha-D-ribose 1-phosphate: step 1/6. In terms of biological role, catalyzes the interconversion of methylthioribose-1-phosphate (MTR-1-P) into methylthioribulose-1-phosphate (MTRu-1-P). The protein is Methylthioribose-1-phosphate isomerase of Kluyveromyces lactis (strain ATCC 8585 / CBS 2359 / DSM 70799 / NBRC 1267 / NRRL Y-1140 / WM37) (Yeast).